The sequence spans 364 residues: Aminomethyltransferase (364 aa).

The protein belongs to the GcvT family. The glycine cleavage system is composed of four proteins: P, T, L and H.

It carries out the reaction N(6)-[(R)-S(8)-aminomethyldihydrolipoyl]-L-lysyl-[protein] + (6S)-5,6,7,8-tetrahydrofolate = N(6)-[(R)-dihydrolipoyl]-L-lysyl-[protein] + (6R)-5,10-methylene-5,6,7,8-tetrahydrofolate + NH4(+). Functionally, the glycine cleavage system catalyzes the degradation of glycine. The sequence is that of Aminomethyltransferase from Shewanella woodyi (strain ATCC 51908 / MS32).